A 677-amino-acid polypeptide reads, in one-letter code: DNA ligase (677 aa).

Residues 43-47 (DHVYD), 92-93 (SM), and Glu122 each bind NAD(+). Lys124 acts as the N6-AMP-lysine intermediate in catalysis. Residues Arg145, Glu179, Lys295, and Lys319 each contribute to the NAD(+) site. Cys413, Cys416, Cys431, and Cys436 together coordinate Zn(2+). Residues 599 to 677 (TSDSYFNGKT…EADLDNYLAQ (79 aa)) enclose the BRCT domain.

This sequence belongs to the NAD-dependent DNA ligase family. LigA subfamily. The cofactor is Mg(2+). Mn(2+) serves as cofactor.

It carries out the reaction NAD(+) + (deoxyribonucleotide)n-3'-hydroxyl + 5'-phospho-(deoxyribonucleotide)m = (deoxyribonucleotide)n+m + AMP + beta-nicotinamide D-nucleotide.. Its function is as follows. DNA ligase that catalyzes the formation of phosphodiester linkages between 5'-phosphoryl and 3'-hydroxyl groups in double-stranded DNA using NAD as a coenzyme and as the energy source for the reaction. It is essential for DNA replication and repair of damaged DNA. This Latilactobacillus sakei subsp. sakei (strain 23K) (Lactobacillus sakei subsp. sakei) protein is DNA ligase.